We begin with the raw amino-acid sequence, 147 residues long: MLYPLSILTSEKNVFNEDVYSVNVPGADGYFEVLAHHATVIALLQPGKLTIINKDHQKLYFGITTGFIEVSHNSATIIADAIESVQEIDVERAKQSYERAKMRLESPDKHVDKERAKRSLNRAKNRIKLFLEIHPQVSFIPLKALLI.

This sequence belongs to the ATPase epsilon chain family. As to quaternary structure, F-type ATPases have 2 components, CF(1) - the catalytic core - and CF(0) - the membrane proton channel. CF(1) has five subunits: alpha(3), beta(3), gamma(1), delta(1), epsilon(1). CF(0) has three main subunits: a, b and c.

It is found in the cell inner membrane. In terms of biological role, produces ATP from ADP in the presence of a proton gradient across the membrane. The sequence is that of ATP synthase epsilon chain from Protochlamydia amoebophila (strain UWE25).